The chain runs to 540 residues: DM7 family protein GM11956 (540 aa).

The disordered stretch occupies residues 416 to 443 (ATDTRGRDEIRTSCDQPQEKDEGSAEAD). The segment covering 417 to 443 (TDTRGRDEIRTSCDQPQEKDEGSAEAD) has biased composition (basic and acidic residues).

This sequence belongs to the DM7 family.

The protein is DM7 family protein GM11956 of Drosophila sechellia (Fruit fly).